Consider the following 660-residue polypeptide: MDEAFGDSLSTDYRWLGHSHFDSHPSAGDSIYFDSLDEDADPSRTARIDRIAELLDGLNDEQISELVNGVNSTTIKENTKKEISNPNDSTRLPLEQIPGSNNLFLDPRHQLGDNSQNAQRHHEPSFNSEKASYTSTPYKNVAPKVIDSPSARHMHSNSPSFPPSQSHTSSYDQSPKGQLRDNISVPNQQDGLDPEVFNQQSKETKKSLQVPPSRNVPPPVTRPNQYNPEPNFSLSSGYPQQHFSQPELQNRNVHLETVPESYPVPPSGYPLTSSTCVSSISQPIQSTDCQKAQENLSNNKQMSSNDQDIDPFKQAITDLPPSFVNIVLEMNATIQSLSNQCQQRDKQIENITKQLLMNQQDYCPTTMSTTVSTPLCPPKRFPKSTKDFKEQKPDTKQVRSATISNDFNLKGNGRYNEKSQIAVPSEIRVQLSTLDAILLQFEHLRKELTQARKEIQILRHTSQNGDQESNESSKNAITTKTTDKGNNKENTMLNDGSTAPAKNDIRNVINTNNLDAKLSDESELMIEKNKSYSTPASSTIPTFHTSQPLTSLNMPDSRFNLAKEKQLYYRLGLQHIDQQCSVETANMLKTVLVQLNIPFAIFPSTIGQVRRQLQQGRRLYQWARNIHYLIYEENMRDGLVSKQCLADMLKKIRELKKRSL.

Disordered stretches follow at residues 79–243 (TKKE…QQHF), 368–396 (STTV…PDTK), and 459–503 (RHTS…PAKN). Polar residues-rich tracts occupy residues 125–138 (SFNS…STPY), 156–176 (SNSP…QSPK), and 222–243 (RPNQ…QQHF). Basic and acidic residues predominate over residues 384–396 (STKDFKEQKPDTK). Composition is skewed to polar residues over residues 459–480 (RHTS…ITTK) and 488–497 (KENTMLNDGS).

As to quaternary structure, homodimer. Interacts with cdc11, sad1, plo1 and dma1.

Its subcellular location is the cytoplasm. The protein localises to the cytoskeleton. It localises to the microtubule organizing center. It is found in the spindle pole body. In terms of biological role, required for activation of the spg1 GTPase signaling cascade which leads to the initiation of septation and the subsequent termination of mitosis. May act as a scaffold at the spindle pole body to which other components of the spg1 signaling cascade attach. This chain is Septation initiation protein sid4 (sid4), found in Schizosaccharomyces pombe (strain 972 / ATCC 24843) (Fission yeast).